The chain runs to 341 residues: L-sulfolactate dehydrogenase (341 aa).

Belongs to the LDH2/MDH2 oxidoreductase family.

The protein localises to the cytoplasm. It catalyses the reaction a (2S)-2-hydroxycarboxylate + NAD(+) = a 2-oxocarboxylate + NADH + H(+). The protein operates within cofactor biosynthesis; coenzyme M biosynthesis; sulfoacetaldehyde from phosphoenolpyruvate and sulfite: step 3/4. Its pathway is cofactor biosynthesis; 5,6,7,8-tetrahydromethanopterin biosynthesis. Its function is as follows. Catalyzes the reduction of sulfopyruvate to (R)-sulfolactate. Involved in the biosynthesis of both coenzyme M (with (R)-sulfolactate) and methanopterin (with alpha-ketoglutarate). This chain is L-sulfolactate dehydrogenase (comC), found in Methanothermobacter thermautotrophicus (strain ATCC 29096 / DSM 1053 / JCM 10044 / NBRC 100330 / Delta H) (Methanobacterium thermoautotrophicum).